Consider the following 426-residue polypeptide: D-tagatose-1,6-bisphosphate aldolase subunit KbaZ (426 aa).

It belongs to the GatZ/KbaZ family. KbaZ subfamily. As to quaternary structure, forms a complex with KbaY.

It participates in carbohydrate metabolism; D-tagatose 6-phosphate degradation; D-glyceraldehyde 3-phosphate and glycerone phosphate from D-tagatose 6-phosphate: step 2/2. In terms of biological role, component of the tagatose-1,6-bisphosphate aldolase KbaYZ that is required for full activity and stability of the Y subunit. Could have a chaperone-like function for the proper and stable folding of KbaY. When expressed alone, KbaZ does not show any aldolase activity. The polypeptide is D-tagatose-1,6-bisphosphate aldolase subunit KbaZ (Escherichia coli (strain SMS-3-5 / SECEC)).